A 214-amino-acid chain; its full sequence is LexA repressor (214 aa).

Residues 28-48 constitute a DNA-binding region (H-T-H motif); sequence IRDIQRELSISSTSVVAYNLR. Residues Ser133 and Lys172 each act as for autocatalytic cleavage activity in the active site.

This sequence belongs to the peptidase S24 family. In terms of assembly, homodimer.

The enzyme catalyses Hydrolysis of Ala-|-Gly bond in repressor LexA.. Functionally, represses a number of genes involved in the response to DNA damage (SOS response), including recA and lexA. In the presence of single-stranded DNA, RecA interacts with LexA causing an autocatalytic cleavage which disrupts the DNA-binding part of LexA, leading to derepression of the SOS regulon and eventually DNA repair. In Herpetosiphon aurantiacus (strain ATCC 23779 / DSM 785 / 114-95), this protein is LexA repressor.